The following is a 998-amino-acid chain: Kinesin-like protein KIF19 (998 aa).

Residues Gln11–Ile346 form the Kinesin motor domain. Residue Gly104–Thr111 participates in ATP binding. Coiled-coil stretches lie at residues His360–Ala391 and Glu424–Ile452. Basic and acidic residues predominate over residues Glu482–Asp494. The interval Glu482–Leu503 is disordered. A coiled-coil region spans residues Glu507 to Arg552. Composition is skewed to polar residues over residues Ser662 to Pro676, Lys684 to Ala697, Ser746 to Leu761, and Thr836 to Glu852. 4 disordered regions span residues Ser662–Glu706, Ser746–Pro765, Gly794–Leu911, and Lys948–Asn998. Over residues His989–Asn998 the composition is skewed to basic and acidic residues.

It belongs to the TRAFAC class myosin-kinesin ATPase superfamily. Kinesin family.

The protein resides in the cytoplasm. It is found in the cytoskeleton. It localises to the cell projection. The protein localises to the cilium. In terms of biological role, plus end-directed microtubule-dependent motor protein that regulates the length of motile cilia by mediating depolymerization of microtubules at ciliary tips. The polypeptide is Kinesin-like protein KIF19 (KIF19) (Homo sapiens (Human)).